The sequence spans 216 residues: Large ribosomal subunit protein uL3 (216 aa).

The segment at 136 to 155 (GVSISHRSHGSTGQRQDPGK) is disordered. N5-methylglutamine is present on Gln151.

The protein belongs to the universal ribosomal protein uL3 family. In terms of assembly, part of the 50S ribosomal subunit. Forms a cluster with proteins L14 and L19. In terms of processing, methylated by PrmB.

One of the primary rRNA binding proteins, it binds directly near the 3'-end of the 23S rRNA, where it nucleates assembly of the 50S subunit. The protein is Large ribosomal subunit protein uL3 of Rickettsia prowazekii (strain Madrid E).